We begin with the raw amino-acid sequence, 368 residues long: 3-dehydroquinate synthase (368 aa).

Residues 131–132 (TT), Lys144, and Lys153 contribute to the NAD(+) site. Residues Glu186, His249, and His267 each coordinate Zn(2+).

Belongs to the sugar phosphate cyclases superfamily. Dehydroquinate synthase family. It depends on Co(2+) as a cofactor. Requires Zn(2+) as cofactor. NAD(+) serves as cofactor.

Its subcellular location is the cytoplasm. It carries out the reaction 7-phospho-2-dehydro-3-deoxy-D-arabino-heptonate = 3-dehydroquinate + phosphate. The protein operates within metabolic intermediate biosynthesis; chorismate biosynthesis; chorismate from D-erythrose 4-phosphate and phosphoenolpyruvate: step 2/7. Its function is as follows. Catalyzes the conversion of 3-deoxy-D-arabino-heptulosonate 7-phosphate (DAHP) to dehydroquinate (DHQ). The polypeptide is 3-dehydroquinate synthase (Pelagibacter ubique (strain HTCC1062)).